A 743-amino-acid chain; its full sequence is 1,4-alpha-glucan branching enzyme GlgB (743 aa).

Catalysis depends on D416, which acts as the Nucleophile. The Proton donor role is filled by E469.

Belongs to the glycosyl hydrolase 13 family. GlgB subfamily. Monomer.

It catalyses the reaction Transfers a segment of a (1-&gt;4)-alpha-D-glucan chain to a primary hydroxy group in a similar glucan chain.. It functions in the pathway glycan biosynthesis; glycogen biosynthesis. Catalyzes the formation of the alpha-1,6-glucosidic linkages in glycogen by scission of a 1,4-alpha-linked oligosaccharide from growing alpha-1,4-glucan chains and the subsequent attachment of the oligosaccharide to the alpha-1,6 position. The chain is 1,4-alpha-glucan branching enzyme GlgB from Shewanella baltica (strain OS195).